Reading from the N-terminus, the 128-residue chain is Holo-[acyl-carrier-protein] synthase (128 aa).

Asp-10 and Glu-59 together coordinate Mg(2+).

It belongs to the P-Pant transferase superfamily. AcpS family. Requires Mg(2+) as cofactor.

The protein resides in the cytoplasm. The enzyme catalyses apo-[ACP] + CoA = holo-[ACP] + adenosine 3',5'-bisphosphate + H(+). In terms of biological role, transfers the 4'-phosphopantetheine moiety from coenzyme A to a Ser of acyl-carrier-protein. The chain is Holo-[acyl-carrier-protein] synthase from Syntrophotalea carbinolica (strain DSM 2380 / NBRC 103641 / GraBd1) (Pelobacter carbinolicus).